Here is a 24-residue protein sequence, read N- to C-terminus: Humanin-like 1 (24 aa).

Belongs to the humanin family. As to expression, highly expressed in the kidney, heart muscle and testis.

The protein localises to the secreted. Its subcellular location is the cytoplasm. Plays a role as a neuroprotective and antiapoptotic factor. The sequence is that of Humanin-like 1 from Homo sapiens (Human).